A 330-amino-acid polypeptide reads, in one-letter code: Small ribosomal subunit protein uS15m (330 aa).

The protein belongs to the universal ribosomal protein uS15 family. As to quaternary structure, component of the mitochondrial ribosome small subunit (28S) which comprises a 12S rRNA and about 30 distinct proteins.

It localises to the mitochondrion. This Caenorhabditis elegans protein is Small ribosomal subunit protein uS15m (mrps-15).